The primary structure comprises 383 residues: uncharacterized protein (383 aa).

Belongs to the peptidase M20 family.

This is an uncharacterized protein from Staphylococcus epidermidis (strain ATCC 12228 / FDA PCI 1200).